The following is a 306-amino-acid chain: Cysteine synthase (306 aa).

K46 is subject to N6-(pyridoxal phosphate)lysine. Pyridoxal 5'-phosphate-binding positions include N76, 180–184 (GSGGT), and S267.

It belongs to the cysteine synthase/cystathionine beta-synthase family. Homodimer. Pyridoxal 5'-phosphate is required as a cofactor.

It catalyses the reaction O-acetyl-L-serine + hydrogen sulfide = L-cysteine + acetate. Its pathway is amino-acid biosynthesis; L-cysteine biosynthesis; L-cysteine from L-serine: step 2/2. This chain is Cysteine synthase (cysM), found in Helicobacter pylori (strain ATCC 700392 / 26695) (Campylobacter pylori).